A 334-amino-acid chain; its full sequence is snRNA-activating protein complex subunit 2 (334 aa).

Disordered regions lie at residues 137–200 (LHSK…STEE) and 271–306 (AGGS…ELKS). Low complexity predominate over residues 167 to 180 (IPSSAPAAPSSAPR).

In terms of assembly, part of the SNAPc complex composed of 5 subunits: SNAPC1, SNAPC2, SNAPC3, SNAPC4 and SNAPC5. SNAPC2 interacts with TBP and SNAPC4.

It is found in the nucleus. In terms of biological role, part of the SNAPc complex required for the transcription of both RNA polymerase II and III small-nuclear RNA genes. Binds to the proximal sequence element (PSE), a non-TATA-box basal promoter element common to these 2 types of genes. Recruits TBP and BRF2 to the U6 snRNA TATA box. The polypeptide is snRNA-activating protein complex subunit 2 (SNAPC2) (Homo sapiens (Human)).